A 220-amino-acid chain; its full sequence is Putative cobalt transport protein CbiM (220 aa).

6 consecutive transmembrane segments (helical) span residues 6 to 26 (GFLP…VISY), 45 to 65 (IAVA…SVTG), 74 to 94 (GIAV…IVLL), 107 to 127 (TLGA…WVVF), 153 to 173 (LVTS…AGVV), and 188 to 208 (IPIG…IAMS).

It belongs to the CbiM family. Forms an energy-coupling factor (ECF) transporter complex composed of an ATP-binding protein (A component, CbiO), a transmembrane protein (T component, CbiQ) and 2 possible substrate-capture proteins (S components, CbiM and CbiN) of unknown stoichimetry.

The protein localises to the cell membrane. It participates in cofactor biosynthesis; adenosylcobalamin biosynthesis. Functionally, part of the energy-coupling factor (ECF) transporter complex CbiMNOQ involved in cobalt import. The polypeptide is Putative cobalt transport protein CbiM (Halobacterium salinarum (strain ATCC 29341 / DSM 671 / R1)).